Reading from the N-terminus, the 105-residue chain is Sulfite reductase, dissimilatory-type subunit gamma (105 aa).

The protein belongs to the DsrC/TusE family. In terms of assembly, heterohexamer of two alpha, two beta and two gamma subunits.

It is found in the cytoplasm. It carries out the reaction [DsrC protein]-trisulfide + NAD(+) + 3 H2O = [DsrC protein]-dithiol + sulfite + NADH + 3 H(+). Catalyzes the reduction of sulfite to sulfide. This is the terminal oxidation reaction in sulfate respiration, a process catalyzed by the sulfate-reducing bacteria. This Nitratidesulfovibrio vulgaris (strain ATCC 29579 / DSM 644 / CCUG 34227 / NCIMB 8303 / VKM B-1760 / Hildenborough) (Desulfovibrio vulgaris) protein is Sulfite reductase, dissimilatory-type subunit gamma (dsvC).